The chain runs to 59 residues: Bdellastasin (59 aa).

Disulfide bonds link Cys10–Cys21, Cys15–Cys26, Cys28–Cys48, Cys33–Cys52, and Cys37–Cys54. The 27-residue stretch at 28-54 folds into the Antistasin-like domain; that stretch reads CSDLHCKVKCEHGFKKDDNGCEYACIC.

It is found in the secreted. Its function is as follows. Strong inhibitor of mammalian trypsin, plasmin and acrosin. This chain is Bdellastasin, found in Hirudo medicinalis (Medicinal leech).